Consider the following 204-residue polypeptide: MARPDKVAAVAELKEKFSSAGATVLTEYRGLSVSALKDLRRSLGSDATYAVAKNTLTRIAAKEAGIEGLDDQLVGPTALAFINGDVASVAKGLKNFAKDNPLLVIKGGVMDGNVLDADQVKKLADLESREVLLAKLAGGLKANLTKAAVVFNALPSKAARGLGALQEKAAADPSVIGGAGEASDQEPKTTETPEASAAQDNTNE.

The interval 170–204 (AADPSVIGGAGEASDQEPKTTETPEASAAQDNTNE) is disordered. Residues 192-204 (TPEASAAQDNTNE) show a composition bias toward polar residues.

The protein belongs to the universal ribosomal protein uL10 family. In terms of assembly, part of the ribosomal stalk of the 50S ribosomal subunit. The N-terminus interacts with L11 and the large rRNA to form the base of the stalk. The C-terminus forms an elongated spine to which L12 dimers bind in a sequential fashion forming a multimeric L10(L12)X complex.

In terms of biological role, forms part of the ribosomal stalk, playing a central role in the interaction of the ribosome with GTP-bound translation factors. The polypeptide is Large ribosomal subunit protein uL10 (Cutibacterium acnes (strain DSM 16379 / KPA171202) (Propionibacterium acnes)).